Here is a 265-residue protein sequence, read N- to C-terminus: UPF0354 protein ABC2771 (265 aa).

This sequence belongs to the UPF0354 family.

This chain is UPF0354 protein ABC2771, found in Shouchella clausii (strain KSM-K16) (Alkalihalobacillus clausii).